A 315-amino-acid polypeptide reads, in one-letter code: Glycine--tRNA ligase alpha subunit (315 aa).

This sequence belongs to the class-II aminoacyl-tRNA synthetase family. Tetramer of two alpha and two beta subunits.

The protein resides in the cytoplasm. It carries out the reaction tRNA(Gly) + glycine + ATP = glycyl-tRNA(Gly) + AMP + diphosphate. The protein is Glycine--tRNA ligase alpha subunit of Pseudomonas paraeruginosa (strain DSM 24068 / PA7) (Pseudomonas aeruginosa (strain PA7)).